We begin with the raw amino-acid sequence, 364 residues long: Transcription factor IIIA (364 aa).

9 C2H2-type zinc fingers span residues 38–62 (FICS…LCKH), 68–92 (FVCD…VLIH), 98–123 (FVCA…ERKH), 130–154 (YVCS…QCQH), 160–184 (FRCT…GKVH), 187–211 (YLCQ…REAH), 215–237 (ITCN…MKTH), 244–269 (YRCP…LSFH), and 275–299 (FVCE…SVVH). The interval 299–364 (HDPDKKRMKL…PPPAALLTVC (66 aa)) is disordered. Low complexity predominate over residues 338–352 (SLPNASAESSSSPEA).

The protein resides in the nucleus. In terms of biological role, involved in ribosomal large subunit biogenesis. Binds the approximately 50 base pairs internal control region (ICR) of 5S ribosomal RNA genes. It is required for their RNA polymerase III-dependent transcription and may also maintain the transcription of other genes. Also binds the transcribed 5S RNA's. This is Transcription factor IIIA (Gtf3a) from Mus musculus (Mouse).